The chain runs to 325 residues: MNWLTNVVRPKIRNILRRETPENLWIKCPDSGHLVFYKDVEANQFVIPGSNYHMRMGAVARLKSVFDGETWYDIALPEVTADPLKFRDERRYVDRIKDARAKTGLHDAVKVGYGKLENFPVVIAVQDFDFMGGSLGMAAGEAIVRGMELALEKRAPFILFAASGGARMQEGILSLMQMPRTTVGVQMLREAKLPYIVVLTNPTTGGVTASYAMLGDVQLAEPGALIGFAGARVIEQTIREKLPEGFQRAEYLRDHGMVDIVVHRHDLRSTLARLCRILTKSPAAEIEVVTPEPEPVAEAAVVLPAEAVAPPPAAEAAAPPATPPA.

In terms of domain architecture, CoA carboxyltransferase N-terminal spans 24–293; it reads LWIKCPDSGH…AEIEVVTPEP (270 aa).

It belongs to the AccD/PCCB family. In terms of assembly, acetyl-CoA carboxylase is a heterohexamer composed of biotin carboxyl carrier protein (AccB), biotin carboxylase (AccC) and two subunits each of ACCase subunit alpha (AccA) and ACCase subunit beta (AccD).

It localises to the cytoplasm. The catalysed reaction is N(6)-carboxybiotinyl-L-lysyl-[protein] + acetyl-CoA = N(6)-biotinyl-L-lysyl-[protein] + malonyl-CoA. It participates in lipid metabolism; malonyl-CoA biosynthesis; malonyl-CoA from acetyl-CoA: step 1/1. Functionally, component of the acetyl coenzyme A carboxylase (ACC) complex. Biotin carboxylase (BC) catalyzes the carboxylation of biotin on its carrier protein (BCCP) and then the CO(2) group is transferred by the transcarboxylase to acetyl-CoA to form malonyl-CoA. This Rhodopseudomonas palustris (strain BisA53) protein is Acetyl-coenzyme A carboxylase carboxyl transferase subunit beta.